A 975-amino-acid polypeptide reads, in one-letter code: Aminopeptidase N (975 aa).

Over 1–11 the chain is Cytoplasmic; that stretch reads MAKGFYISKAL. A helical; Signal-anchor for type II membrane protein membrane pass occupies residues 12-32; sequence GILAIVLGIAAVSTIIALSVV. Residues 33 to 74 form a cytosolic Ser/Thr-rich junction region; the sequence is YAQEKNKNAESSPVSSPVSSPVSSPVSPTNPSTTAATTLAQS. The Extracellular segment spans residues 33 to 975; that stretch reads YAQEKNKNAE…VLQWFRENSQ (943 aa). A disordered region spans residues 41-68; the sequence is AESSPVSSPVSSPVSSPVSPTNPSTTAA. Residues 43–59 are compositionally biased toward low complexity; sequence SSPVSSPVSSPVSSPVS. The segment at 75–975 is metalloprotease; sequence KPWNHYRLPK…VLQWFRENSQ (901 aa). N-linked (GlcNAc...) asparagine glycosylation occurs at Asn-134. Sulfotyrosine is present on Tyr-182. Asn-240 and Asn-271 each carry an N-linked (GlcNAc...) asparagine glycan. Position 358-362 (358-362) interacts with substrate; sequence GAMEN. Position 394 (His-394) interacts with Zn(2+). The active-site Proton acceptor is Glu-395. Positions 398 and 417 each coordinate Zn(2+). 2 positions are modified to sulfotyrosine: Tyr-425 and Tyr-430. 5 N-linked (GlcNAc...) asparagine glycosylation sites follow: Asn-533, Asn-580, Asn-633, Asn-689, and Asn-747. Intrachain disulfides connect Cys-769-Cys-776 and Cys-806-Cys-842. Residue Asn-826 is glycosylated (N-linked (GlcNAc...) asparagine).

This sequence belongs to the peptidase M1 family. (Microbial infection) Interacts with CCoV spike glycoprotein. As to quaternary structure, homodimer. Interacts with SLC6A19. Requires Zn(2+) as cofactor. In terms of processing, sulfated. Post-translationally, N- and O-glycosylated. May undergo proteolysis and give rise to a soluble form.

Its subcellular location is the cell membrane. It catalyses the reaction Release of an N-terminal amino acid, Xaa-|-Yaa- from a peptide, amide or arylamide. Xaa is preferably Ala, but may be most amino acids including Pro (slow action). When a terminal hydrophobic residue is followed by a prolyl residue, the two may be released as an intact Xaa-Pro dipeptide.. Its function is as follows. Broad specificity aminopeptidase which plays a role in the final digestion of peptides generated from hydrolysis of proteins by gastric and pancreatic proteases. Also involved in the processing of various peptides including peptide hormones, such as angiotensin III and IV, neuropeptides, and chemokines. May also be involved the cleavage of peptides bound to major histocompatibility complex class II molecules of antigen presenting cells. May have a role in angiogenesis and promote cholesterol crystallization. May have a role in amino acid transport by acting as binding partner of amino acid transporter SLC6A19 and regulating its activity. In terms of biological role, (Microbial infection) Probable receptor for canine coronavirus (CCoV). The sequence is that of Aminopeptidase N (ANPEP) from Canis lupus familiaris (Dog).